A 241-amino-acid chain; its full sequence is Sensory transduction protein LytT (241 aa).

In terms of domain architecture, Response regulatory spans 3-117 (RVLIVDDEML…RIQQTLKKYK (115 aa)). Position 54 is a 4-aspartylphosphate (Asp54). An HTH LytTR-type domain is found at 137-241 (LALSVGESIV…AKELKKLLHI (105 aa)).

In terms of processing, phosphorylated by LytS.

It is found in the cytoplasm. In terms of biological role, member of the two-component regulatory system LytS/LytT that probably regulates genes involved in cell wall metabolism. This is Sensory transduction protein LytT (lytT) from Bacillus subtilis (strain 168).